The sequence spans 121 residues: Large ribosomal subunit protein uL24 (121 aa).

Residues methionine 1–methionine 23 are disordered.

The protein belongs to the universal ribosomal protein uL24 family. In terms of assembly, part of the 50S ribosomal subunit.

Its function is as follows. One of two assembly initiator proteins, it binds directly to the 5'-end of the 23S rRNA, where it nucleates assembly of the 50S subunit. In terms of biological role, located at the polypeptide exit tunnel on the outside of the subunit. The chain is Large ribosomal subunit protein uL24 from Methanoregula boonei (strain DSM 21154 / JCM 14090 / 6A8).